The primary structure comprises 141 residues: MAIERTLSIIKPDAVAKNVIGQIYARFEGAGLKVIAAKMVHLSRGEAEQFYGVHKERPFFKDLVDFMVSGPVMIQALEGENAILKNRELMGATDPKKAEKGTIRADFADSIDANAVHGSDAAETAAVEVAFFFPGMNVYSR.

Positions 11, 59, 87, 93, 104, and 114 each coordinate ATP. His-117 serves as the catalytic Pros-phosphohistidine intermediate.

The protein belongs to the NDK family. As to quaternary structure, homotetramer. The cofactor is Mg(2+).

The protein resides in the cytoplasm. The catalysed reaction is a 2'-deoxyribonucleoside 5'-diphosphate + ATP = a 2'-deoxyribonucleoside 5'-triphosphate + ADP. It catalyses the reaction a ribonucleoside 5'-diphosphate + ATP = a ribonucleoside 5'-triphosphate + ADP. Major role in the synthesis of nucleoside triphosphates other than ATP. The ATP gamma phosphate is transferred to the NDP beta phosphate via a ping-pong mechanism, using a phosphorylated active-site intermediate. This is Nucleoside diphosphate kinase from Delftia acidovorans (strain DSM 14801 / SPH-1).